Here is a 396-residue protein sequence, read N- to C-terminus: Large ribosomal subunit protein uL4A (396 aa).

The span at 352–373 shows a compositional bias: basic and acidic residues; it reads KAKEKKPDDGKPKAKKPLDAKT. A disordered region spans residues 352–374; it reads KAKEKKPDDGKPKAKKPLDAKTK.

The protein belongs to the universal ribosomal protein uL4 family. In terms of assembly, component of the large ribosomal subunit.

It is found in the cytoplasm. In terms of biological role, component of the large ribosomal subunit. The ribosome is a large ribonucleoprotein complex responsible for the synthesis of proteins in the cell. The chain is Large ribosomal subunit protein uL4A (rpl4-a) from Xenopus laevis (African clawed frog).